A 292-amino-acid polypeptide reads, in one-letter code: 4'-phosphopantetheinyl transferase 1 (292 aa).

This sequence belongs to the P-Pant transferase superfamily.

The catalysed reaction is apo-[ACP] + CoA = holo-[ACP] + adenosine 3',5'-bisphosphate + H(+). Its function is as follows. Transfers the 4'-phosphopantetheine moiety from coenzyme A to a Ser of an acyl-carrier-protein. The enzyme is able to transfer the cofactor to a broad range of enzymes with acyl- or peptidyl-carrier protein domains. Required for primary biological processes such as growth and asexual/sexual development, and activates target enzymes involved in the synthesis of metabolites such as fatty acids, nonribosomal peptides and polyketides such as the gamma-pyrones fusapyrone (FPY) and deoxyfusapyrone (dFPY). This is 4'-phosphopantetheinyl transferase 1 from Fusarium mangiferae (Mango malformation disease fungus).